Consider the following 454-residue polypeptide: CCA-adding enzyme (454 aa).

ATP-binding residues include Ser51 and Lys54. Positions 51 and 54 each coordinate CTP. Positions 63, 65, and 118 each coordinate Mg(2+). ATP-binding residues include His141, Lys161, and Tyr170. His141, Lys161, and Tyr170 together coordinate CTP.

Belongs to the tRNA nucleotidyltransferase/poly(A) polymerase family. Archaeal CCA-adding enzyme subfamily. As to quaternary structure, homodimer. Mg(2+) is required as a cofactor.

The enzyme catalyses a tRNA precursor + 2 CTP + ATP = a tRNA with a 3' CCA end + 3 diphosphate. It carries out the reaction a tRNA with a 3' CCA end + 2 CTP + ATP = a tRNA with a 3' CCACCA end + 3 diphosphate. Catalyzes the addition and repair of the essential 3'-terminal CCA sequence in tRNAs without using a nucleic acid template. Adds these three nucleotides in the order of C, C, and A to the tRNA nucleotide-73, using CTP and ATP as substrates and producing inorganic pyrophosphate. tRNA 3'-terminal CCA addition is required both for tRNA processing and repair. Also involved in tRNA surveillance by mediating tandem CCA addition to generate a CCACCA at the 3' terminus of unstable tRNAs. While stable tRNAs receive only 3'-terminal CCA, unstable tRNAs are marked with CCACCA and rapidly degraded. The protein is CCA-adding enzyme of Methanothermobacter thermautotrophicus (strain ATCC 29096 / DSM 1053 / JCM 10044 / NBRC 100330 / Delta H) (Methanobacterium thermoautotrophicum).